We begin with the raw amino-acid sequence, 240 residues long: Lipoprotein signal peptidase (240 aa).

The next 4 helical transmembrane spans lie at 38 to 58 (LIWK…TSFL), 73 to 93 (LIPG…FGTL), 98 to 118 (PSLV…VLLF), and 120 to 140 (SNYL…SNII). Active-site residues include Asp162 and Asp179. Residues 177–197 (FPDTFVIIGMIFVGIQIIISF) traverse the membrane as a helical segment.

It belongs to the peptidase A8 family.

The protein localises to the cell membrane. It catalyses the reaction Release of signal peptides from bacterial membrane prolipoproteins. Hydrolyzes -Xaa-Yaa-Zaa-|-(S,diacylglyceryl)Cys-, in which Xaa is hydrophobic (preferably Leu), and Yaa (Ala or Ser) and Zaa (Gly or Ala) have small, neutral side chains.. It functions in the pathway protein modification; lipoprotein biosynthesis (signal peptide cleavage). Functionally, this protein specifically catalyzes the removal of signal peptides from prolipoproteins. The polypeptide is Lipoprotein signal peptidase (Malacoplasma penetrans (strain HF-2) (Mycoplasma penetrans)).